The sequence spans 150 residues: Transcriptional regulator MraZ (150 aa).

2 SpoVT-AbrB domains span residues 6 to 52 (EFFN…PYQE) and 80 to 126 (AVEC…NRTK).

Belongs to the MraZ family. As to quaternary structure, forms oligomers.

Its subcellular location is the cytoplasm. The protein resides in the nucleoid. In Syntrophotalea carbinolica (strain DSM 2380 / NBRC 103641 / GraBd1) (Pelobacter carbinolicus), this protein is Transcriptional regulator MraZ.